The primary structure comprises 218 residues: Fucoxanthin-chlorophyll a-c binding protein, chloroplastic (218 aa).

The transit peptide at 1–36 (MFYSAAVAALMVGSASAFLAPAQFNSVAKSSGALSM) directs the protein to the chloroplast.

Belongs to the fucoxanthin chlorophyll protein family. In terms of assembly, the LHC complex of chromophytic algae is composed of fucoxanthin, chlorophyll A and C bound non-covalently by fucoxanthin chlorophyll proteins (FCPs). The ratio of pigments in this LHC is; fucoxanthin: chlorophyll C: chlorophyll A; (0.6-1): (0.1-0.3): (1).

Its subcellular location is the plastid. The protein localises to the chloroplast thylakoid membrane. In terms of biological role, the light-harvesting complex (LHC) functions as a light receptor, it captures and delivers excitation energy to photosystems with which it is closely associated. Energy is transferred from the carotenoid and chlorophyll C (or B) to chlorophyll A and the photosynthetic reaction centers where it is used to synthesize ATP and reducing power. The sequence is that of Fucoxanthin-chlorophyll a-c binding protein, chloroplastic from Chattonella marina var. antiqua (Red tide flagellate).